Here is a 185-residue protein sequence, read N- to C-terminus: NEDD8-conjugating enzyme UBE2F (185 aa).

The tract at residues 1 to 29 (MLTLASKLKRDDGVRGPRASNPASDSTRR) is interaction with UBA3. Residues 11 to 30 (DDGVRGPRASNPASDSTRRV) form a disordered region. Residues 32–185 (VRDKLLVKEV…VEDYIKRYAR (154 aa)) enclose the UBC core domain. The active-site Glycyl thioester intermediate is the C116.

It belongs to the ubiquitin-conjugating enzyme family. UBE2F subfamily.

It carries out the reaction [E1 NEDD8-activating enzyme]-S-[NEDD8 protein]-yl-L-cysteine + [E2 NEDD8-conjugating enzyme]-L-cysteine = [E1 NEDD8-activating enzyme]-L-cysteine + [E2 NEDD8-conjugating enzyme]-S-[NEDD8-protein]-yl-L-cysteine.. It participates in protein modification; protein neddylation. Its function is as follows. Accepts the ubiquitin-like protein NEDD8 from the UBA3-NAE1 E1 complex and catalyzes its covalent attachment to other proteins. Together with the E3 ubiquitin ligase RNF7/RBX2, specifically neddylates cullin-5 (CUL5). Does not neddylate CUL1, CUL2, CUL3, CUL4A or CUL4B. This Gallus gallus (Chicken) protein is NEDD8-conjugating enzyme UBE2F (UBE2F).